The sequence spans 464 residues: Citrate synthase 5, mitochondrial (464 aa).

The N-terminal 25 residues, 1–25, are a transit peptide targeting the mitochondrion; it reads MVFFRSVSAISRLRSRAVQQSSLSN. Catalysis depends on residues His300, His346, and Asp401.

The protein belongs to the citrate synthase family.

The protein localises to the mitochondrion matrix. The enzyme catalyses oxaloacetate + acetyl-CoA + H2O = citrate + CoA + H(+). It participates in carbohydrate metabolism; tricarboxylic acid cycle; isocitrate from oxaloacetate: step 1/2. In Arabidopsis thaliana (Mouse-ear cress), this protein is Citrate synthase 5, mitochondrial (CSY5).